Here is a 230-residue protein sequence, read N- to C-terminus: Small ribosomal subunit protein uS3c (230 aa).

Residues 39-109 (IRSFIHSKLS…QLRVNVVEIA (71 aa)) form the KH type-2 domain.

This sequence belongs to the universal ribosomal protein uS3 family. As to quaternary structure, part of the 30S ribosomal subunit.

It is found in the plastid. The protein localises to the chloroplast. The polypeptide is Small ribosomal subunit protein uS3c (rps3) (Pyropia yezoensis (Susabi-nori)).